A 341-amino-acid polypeptide reads, in one-letter code: Ketol-acid reductoisomerase (NADP(+)) (341 aa).

Residues L3–T184 form the KARI N-terminal Rossmann domain. NADP(+) is bound by residues F26–Q29, S54, and D84–Q87. H109 is an active-site residue. An NADP(+)-binding site is contributed by G135. Residues T185 to I330 enclose the KARI C-terminal knotted domain. The Mg(2+) site is built by D193, E197, E229, and E233. S254 contributes to the substrate binding site.

The protein belongs to the ketol-acid reductoisomerase family. It depends on Mg(2+) as a cofactor.

The catalysed reaction is (2R)-2,3-dihydroxy-3-methylbutanoate + NADP(+) = (2S)-2-acetolactate + NADPH + H(+). It carries out the reaction (2R,3R)-2,3-dihydroxy-3-methylpentanoate + NADP(+) = (S)-2-ethyl-2-hydroxy-3-oxobutanoate + NADPH + H(+). The protein operates within amino-acid biosynthesis; L-isoleucine biosynthesis; L-isoleucine from 2-oxobutanoate: step 2/4. It functions in the pathway amino-acid biosynthesis; L-valine biosynthesis; L-valine from pyruvate: step 2/4. Its function is as follows. Involved in the biosynthesis of branched-chain amino acids (BCAA). Catalyzes an alkyl-migration followed by a ketol-acid reduction of (S)-2-acetolactate (S2AL) to yield (R)-2,3-dihydroxy-isovalerate. In the isomerase reaction, S2AL is rearranged via a Mg-dependent methyl migration to produce 3-hydroxy-3-methyl-2-ketobutyrate (HMKB). In the reductase reaction, this 2-ketoacid undergoes a metal-dependent reduction by NADPH to yield (R)-2,3-dihydroxy-isovalerate. The protein is Ketol-acid reductoisomerase (NADP(+)) of Helicobacter hepaticus (strain ATCC 51449 / 3B1).